The chain runs to 334 residues: DNA polymerase beta (334 aa).

K(+) contacts are provided by K60, L62, and V65. Residues K60, L62, and V65 each coordinate Na(+). K72 functions as the Nucleophile; Schiff-base intermediate with DNA; for 5'-dRP lyase activity in the catalytic mechanism. The residue at position 83 (R83) is an Omega-N-methylarginine; by PRMT6. K(+)-binding residues include T101, V103, and I106. Residues T101, V103, and I106 each contribute to the Na(+) site. R149 is an a 2'-deoxyribonucleoside 5'-triphosphate binding site. Residue R152 is modified to Omega-N-methylarginine; by PRMT6. Residues S180, R183, G189, and D190 each coordinate a 2'-deoxyribonucleoside 5'-triphosphate. Residues 183 to 192 form a DNA-binding region; it reads RGAESSGDMD. Mg(2+) contacts are provided by D190, D192, and D255.

It belongs to the DNA polymerase type-X family. Monomer. The cofactor is Mg(2+). Post-translationally, methylation by PRMT6 stimulates the polymerase activity by enhancing DNA binding and processivity. Ubiquitinated: monoubiquitinated by huwe1/arf-bp1. Monoubiquitinated protein is then the target of stub1/chip, which catalyzes polyubiquitination from monoubiquitin, leading to degradation by the proteasome. usp47 mediates the deubiquitination of monoubiquitinated protein, preventing polyubiquitination by STUB1/CHIP and its subsequent degradation.

The protein resides in the nucleus. Its subcellular location is the cytoplasm. The catalysed reaction is DNA(n) + a 2'-deoxyribonucleoside 5'-triphosphate = DNA(n+1) + diphosphate. It catalyses the reaction a 5'-end 2'-deoxyribose-2'-deoxyribonucleotide-DNA = (2E,4S)-4-hydroxypenten-2-al-5-phosphate + a 5'-end 5'-phospho-2'-deoxyribonucleoside-DNA + H(+). The enzyme catalyses 2'-deoxyribonucleotide-(2'-deoxyribose 5'-phosphate)-2'-deoxyribonucleotide-DNA = a 3'-end 2'-deoxyribonucleotide-(2,3-dehydro-2,3-deoxyribose 5'-phosphate)-DNA + a 5'-end 5'-phospho-2'-deoxyribonucleoside-DNA + H(+). Its function is as follows. Repair polymerase that plays a key role in base-excision repair. During this process, the damaged base is excised by specific DNA glycosylases, the DNA backbone is nicked at the abasic site by an apurinic/apyrimidic (AP) endonuclease, and POLB removes 5'-deoxyribose-phosphate from the preincised AP site acting as a 5'-deoxyribose-phosphate lyase (5'-dRP lyase); through its DNA polymerase activity, it adds one nucleotide to the 3' end of the arising single-nucleotide gap. Conducts 'gap-filling' DNA synthesis in a stepwise distributive fashion rather than in a processive fashion as for other DNA polymerases. It is also able to cleave sugar-phosphate bonds 3' to an intact AP site, acting as an AP lyase. The chain is DNA polymerase beta (polb) from Xenopus laevis (African clawed frog).